Reading from the N-terminus, the 76-residue chain is Acyl carrier protein (76 aa).

The Carrier domain maps to 1–76; that stretch reads MALLDDVKAV…DAIKYIENNA (76 aa). At serine 36 the chain carries O-(pantetheine 4'-phosphoryl)serine.

Belongs to the acyl carrier protein (ACP) family. Post-translationally, 4'-phosphopantetheine is transferred from CoA to a specific serine of apo-ACP by AcpS. This modification is essential for activity because fatty acids are bound in thioester linkage to the sulfhydryl of the prosthetic group.

Its subcellular location is the cytoplasm. It participates in lipid metabolism; fatty acid biosynthesis. In terms of biological role, carrier of the growing fatty acid chain in fatty acid biosynthesis. In Aliarcobacter butzleri (strain RM4018) (Arcobacter butzleri), this protein is Acyl carrier protein.